A 109-amino-acid chain; its full sequence is Nucleoid-associated protein BU482 (109 aa).

This sequence belongs to the YbaB/EbfC family. As to quaternary structure, homodimer.

Its subcellular location is the cytoplasm. It is found in the nucleoid. Binds to DNA and alters its conformation. May be involved in regulation of gene expression, nucleoid organization and DNA protection. This chain is Nucleoid-associated protein BU482, found in Buchnera aphidicola subsp. Acyrthosiphon pisum (strain APS) (Acyrthosiphon pisum symbiotic bacterium).